A 453-amino-acid chain; its full sequence is Probable glycine dehydrogenase (decarboxylating) subunit 1 (453 aa).

Belongs to the GcvP family. N-terminal subunit subfamily. As to quaternary structure, the glycine cleavage system is composed of four proteins: P, T, L and H. In this organism, the P 'protein' is a heterodimer of two subunits.

The enzyme catalyses N(6)-[(R)-lipoyl]-L-lysyl-[glycine-cleavage complex H protein] + glycine + H(+) = N(6)-[(R)-S(8)-aminomethyldihydrolipoyl]-L-lysyl-[glycine-cleavage complex H protein] + CO2. Its function is as follows. The glycine cleavage system catalyzes the degradation of glycine. The P protein binds the alpha-amino group of glycine through its pyridoxal phosphate cofactor; CO(2) is released and the remaining methylamine moiety is then transferred to the lipoamide cofactor of the H protein. This chain is Probable glycine dehydrogenase (decarboxylating) subunit 1, found in Caulobacter sp. (strain K31).